The chain runs to 140 residues: Large ribosomal subunit protein uL14 (140 aa).

The protein belongs to the universal ribosomal protein uL14 family. As to quaternary structure, component of the large ribosomal subunit.

The protein resides in the cytoplasm. In terms of biological role, component of the large ribosomal subunit. The ribosome is a large ribonucleoprotein complex responsible for the synthesis of proteins in the cell. This is Large ribosomal subunit protein uL14 (rpl23) from Danio rerio (Zebrafish).